A 488-amino-acid chain; its full sequence is Teichuronic acid biosynthesis protein TuaE (488 aa).

14 consecutive transmembrane segments (helical) span residues 7–29, 35–57, 64–86, 91–110, 122–144, 154–173, 180–202, 222–244, 257–274, 279–298, 303–322, 354–376, 397–419, and 459–476; these read AVHTLALLAAAIFGVVLLLGAIH, MQMAAVLAVLAIGLFLLTLATAF, FMAVIYILIACTFLNNAFFAIHL, LFLYRLLLIAAGCLHIFGMV, LQVKGILLFFAFWFIYGLVSLLW, YLALLAMGIFFIYLIVMYVQ, IVYAIWLVMTVFLMIIGFYNHIT, PTSVFFNQNDFATFLSISFFFYI, AIGLVLSLCALYLIFATG, LLGIFAGIAVYIFIVLPPVL, IWLSAAGIALFAVLFASKIY, NAWHFFLDSYGFGVGAGNVSYYL, ILANFGLFIMLGYLSVYAYLIWV, and LFFHWVFMALVIAAVNVL.

It is found in the cell membrane. The protein operates within cell wall biogenesis; teichuronic acid biosynthesis. Might be involved in the polymerization of teichuronic acid repeating units after their translocation to the outer surface of the membrane. This is Teichuronic acid biosynthesis protein TuaE (tuaE) from Bacillus subtilis (strain 168).